We begin with the raw amino-acid sequence, 341 residues long: MAVKHKSESLKHEEGAAKKAKTGLLKLKKIMDIESNVVKYSICIPTTVIDNCNNLEQVTFTAYQIARTAVLFNVQEIIVLDQSKDKKHEKKSRSKETISDCLLLATLLQYFVTPPNLLDTTFKKKNKLYLKCASTFPPLNQLPFMNASAEQHYKEGLSIARDSSKGKSDDALTNLVYIGKNQIITLSNQNIPNTARVTVDTERKEVVSPIDAYKGKPLGYHVRMASTLNEVSEGYTKIVWVNSGDFHYDEELSKYHKVETKLPYIAKLKKSSTSEKPCNILLIFGKWGHLKRCFRRSDLESSSLHHYFSGQLQFPASVPQGNIPIQDSLPIALTMFQRWAS.

It belongs to the class IV-like SAM-binding methyltransferase superfamily.

The protein resides in the nucleus. The protein localises to the nucleolus. The polypeptide is Putative methyltransferase YGR283C (Saccharomyces cerevisiae (strain ATCC 204508 / S288c) (Baker's yeast)).